The sequence spans 782 residues: Translation initiation factor IF-2 (782 aa).

Positions 47–196 (DNAIDGTNKK…TPPKPKELPE (150 aa)) are disordered. Basic and acidic residues predominate over residues 53-65 (TNKKAEAPKKETT). The segment covering 66–81 (SNENGNSKGPNKPNMT) has biased composition (polar residues). Over residues 82 to 93 (NSNEKSNKPNKP) the composition is skewed to low complexity. Residues 115 to 129 (KPANTSNQTQSSGNK) show a composition bias toward polar residues. Low complexity predominate over residues 133 to 170 (GGQKRNNNNNSNRPGGGNPNRPGGNNRPNRGGNFNNKG). The tr-type G domain occupies 283 to 452 (ERPPVVTIMG…LLVSEVEELK (170 aa)). A G1 region spans residues 292–299 (GHVDHGKT). 292–299 (GHVDHGKT) contributes to the GTP binding site. A G2 region spans residues 317–321 (GITQH). The tract at residues 338–341 (DTPG) is G3. Residues 338–342 (DTPGH) and 392–395 (NKID) each bind GTP. Residues 392–395 (NKID) form a G4 region. The segment at 428–430 (SAK) is G5.

The protein belongs to the TRAFAC class translation factor GTPase superfamily. Classic translation factor GTPase family. IF-2 subfamily.

The protein resides in the cytoplasm. Functionally, one of the essential components for the initiation of protein synthesis. Protects formylmethionyl-tRNA from spontaneous hydrolysis and promotes its binding to the 30S ribosomal subunits. Also involved in the hydrolysis of GTP during the formation of the 70S ribosomal complex. This is Translation initiation factor IF-2 from Listeria innocua serovar 6a (strain ATCC BAA-680 / CLIP 11262).